The following is a 161-amino-acid chain: Ribosome maturation factor RimP (161 aa).

Belongs to the RimP family.

Its subcellular location is the cytoplasm. Required for maturation of 30S ribosomal subunits. The sequence is that of Ribosome maturation factor RimP from Rickettsia felis (strain ATCC VR-1525 / URRWXCal2) (Rickettsia azadi).